A 244-amino-acid polypeptide reads, in one-letter code: PF03932 family protein CutC (244 aa).

Belongs to the CutC family.

The protein resides in the cytoplasm. The sequence is that of PF03932 family protein CutC from Pasteurella multocida (strain Pm70).